The following is a 435-amino-acid chain: Histidinol dehydrogenase (435 aa).

3 residues coordinate NAD(+): tyrosine 131, glutamine 189, and asparagine 212. Serine 238, glutamine 260, and histidine 263 together coordinate substrate. Zn(2+)-binding residues include glutamine 260 and histidine 263. Catalysis depends on proton acceptor residues glutamate 327 and histidine 328. Substrate is bound by residues histidine 328, aspartate 361, glutamate 415, and histidine 420. Aspartate 361 provides a ligand contact to Zn(2+). Position 420 (histidine 420) interacts with Zn(2+).

Belongs to the histidinol dehydrogenase family. Homodimer. It depends on Zn(2+) as a cofactor.

The catalysed reaction is L-histidinol + 2 NAD(+) + H2O = L-histidine + 2 NADH + 3 H(+). The protein operates within amino-acid biosynthesis; L-histidine biosynthesis; L-histidine from 5-phospho-alpha-D-ribose 1-diphosphate: step 9/9. Functionally, catalyzes the sequential NAD-dependent oxidations of L-histidinol to L-histidinaldehyde and then to L-histidine. In Buchnera aphidicola subsp. Baizongia pistaciae (strain Bp), this protein is Histidinol dehydrogenase.